The sequence spans 578 residues: MKASRFFIGTLKEAPADAEIVSHKLMVRAGMIRRVAGGIYNYLPVGLRSIRKVEAIVREEMNRAGAIELLMPAVQPAELWQESGRWEQYGPELLRFKDRKDNDFVIGPTHEEVVTDIARNQIKSYRQMPVNFYQIQTKFRDEIRPRFGVMRGREFLMKDAYSFDKDTAGLNESYRKMYDAYVRIFTRLGLEFRAVAADSGSIGGNFSHEFHVIADTGEDAIAYCPTSDFAANIEAAEALPLIAERAAPAEAMEKVATPGKAKCEAVAELLAIPLERTIKSIVLATENEGAEPTIWLIMLRGDHDLNEIKVSKLPGLKNHRFATEQEIVDWFGTPPGYLGPVGTKKPVKVIADRTVANMSDFVVGANEVDYHIAGVNWGRDLPEPEVADVRDVKKGDPSPDGKGTIDICRGIEVGHVFQLGTKYSDAMGATFLDESGKPQPMLMGCYGVGITRILGAAIEQNFDDKGIIWPESIAPFEVVLCPMGYDRSDMVREAADKLYAELAAAGIDVILDDRGERPGVMFADWELIGVPHRLVIGERGLKEGKIEYQGRRDAEATLLPADEAAATVTEKIRAALAH.

This sequence belongs to the class-II aminoacyl-tRNA synthetase family. ProS type 1 subfamily. Homodimer.

Its subcellular location is the cytoplasm. It carries out the reaction tRNA(Pro) + L-proline + ATP = L-prolyl-tRNA(Pro) + AMP + diphosphate. Catalyzes the attachment of proline to tRNA(Pro) in a two-step reaction: proline is first activated by ATP to form Pro-AMP and then transferred to the acceptor end of tRNA(Pro). As ProRS can inadvertently accommodate and process non-cognate amino acids such as alanine and cysteine, to avoid such errors it has two additional distinct editing activities against alanine. One activity is designated as 'pretransfer' editing and involves the tRNA(Pro)-independent hydrolysis of activated Ala-AMP. The other activity is designated 'posttransfer' editing and involves deacylation of mischarged Ala-tRNA(Pro). The misacylated Cys-tRNA(Pro) is not edited by ProRS. The sequence is that of Proline--tRNA ligase from Burkholderia ambifaria (strain ATCC BAA-244 / DSM 16087 / CCUG 44356 / LMG 19182 / AMMD) (Burkholderia cepacia (strain AMMD)).